The sequence spans 79 residues: Aquaporin Z (79 aa).

Helical transmembrane passes span 4–24 and 33–53; these read LFAE…SAVF and IGFA…AYAV. The NPA 1 signature appears at 62–64; the sequence is NPA.

The protein belongs to the MIP/aquaporin (TC 1.A.8) family. In terms of assembly, homotetramer.

It localises to the cell membrane. It carries out the reaction H2O(in) = H2O(out). In terms of biological role, channel that permits osmotically driven movement of water in both directions. It is involved in the osmoregulation and in the maintenance of cell turgor during volume expansion in rapidly growing cells. It mediates rapid entry or exit of water in response to abrupt changes in osmolarity. In Flavobacterium johnsoniae (Cytophaga johnsonae), this protein is Aquaporin Z.